We begin with the raw amino-acid sequence, 586 residues long: Arginine--tRNA ligase (586 aa).

A 'HIGH' region motif is present at residues 127-137; the sequence is PNVAKEMHVGH.

Belongs to the class-I aminoacyl-tRNA synthetase family. In terms of assembly, monomer.

The protein resides in the cytoplasm. It catalyses the reaction tRNA(Arg) + L-arginine + ATP = L-arginyl-tRNA(Arg) + AMP + diphosphate. This Streptomyces coelicolor (strain ATCC BAA-471 / A3(2) / M145) protein is Arginine--tRNA ligase (argS).